A 567-amino-acid chain; its full sequence is uncharacterized protein (567 aa).

6 consecutive transmembrane segments (helical) span residues 20 to 40 (FTIL…SGVL), 69 to 89 (SLET…SVFI), 95 to 115 (AYLT…VALI), 126 to 146 (ILLN…FMCL), 168 to 188 (IPLV…YLLF), and 528 to 548 (IFGS…LLAI).

The protein localises to the cell membrane. This is an uncharacterized protein from Escherichia coli (strain K12).